Reading from the N-terminus, the 758-residue chain is Relaxin receptor 1 (758 aa).

At 1–409 the chain is on the extracellular side; it reads MTSGPFFFCI…ENLLASIIQR (409 aa). Residues 26-63 form the LDL-receptor class A domain; the sequence is SCPLGSFPCGNMSRCLPQLLHCNGVDDCGNRADEDHCG. Intrachain disulfides connect Cys27-Cys40, Cys34-Cys53, and Cys47-Cys62. N-linked (GlcNAc...) asparagine glycosylation is present at Asn36. Leu45, Asn48, Val50, Asp52, Asp58, and Glu59 together coordinate Ca(2+). Asn127 carries N-linked (GlcNAc...) asparagine glycosylation. 10 LRR repeats span residues 127-148, 151-172, 175-196, 199-220, 223-244, 248-269, 272-293, 296-317, 320-341, and 344-365; these read NVTVMSLQRNFIRTLPPNGFRK, ELQKLCLQNNRIHSVSVSAFRG, SLTKLYLSHNRITFLKPGVFED, RLEWLIIEDNHLSRISPLTFYG, SLILLVLMNNALTRLPDKPLCQ, RLHWLDFEGNRIHNLRNLTFIS, NLTVLVMRKNKINYLNEHAFTH, KLDELDLGSNKIENLPPNIFKD, ELSQLNISYNPIQKIEVNQFDC, and KLKSLSLEGIEISNIQQRMFRP. Residues Asn264 and Asn272 are each glycosylated (N-linked (GlcNAc...) asparagine). Residue Asn325 is glycosylated (N-linked (GlcNAc...) asparagine). A glycan (N-linked (GlcNAc...) asparagine) is linked at Asn368. A helical transmembrane segment spans residues 410 to 430; sequence VFVWVVSAITCFGNIFVICMR. Topologically, residues 431 to 443 are cytoplasmic; that stretch reads PYIRSENKLHAMS. The chain crosses the membrane as a helical span at residues 444 to 464; the sequence is IISLCCADCLMGVYLFVIGAF. The Extracellular segment spans residues 465–486; the sequence is DLKFRGEYNKHAQPWMESVHCQ. Cys485 and Cys563 are oxidised to a cystine. Residues 487-507 form a helical membrane-spanning segment; that stretch reads FMGSLAILSTEVSVLLLTFLT. The Cytoplasmic segment spans residues 508 to 527; the sequence is LEKYICIVYPFRCLRPRKCR. The helical transmembrane segment at 528 to 548 threads the bilayer; that stretch reads TITVLIFIWIIGFIVAFAPLG. Topologically, residues 549–577 are extracellular; it reads NKEFFKNYYGTNGVCFPLHSEDTGSTGAQ. Residues 578 to 598 traverse the membrane as a helical segment; the sequence is IYSVVIFLGINLVAFIIIVFS. The Cytoplasmic segment spans residues 599 to 629; sequence YGSMFYSVHQSSVTVTEIQKQVKKEVVLAKR. A helical transmembrane segment spans residues 630–650; that stretch reads FFFIVFTDALCWIPIFILKFL. Position 651 (Ser651) is a topological domain, extracellular. A helical membrane pass occupies residues 652-672; the sequence is LLQVEIPDSITSWVVIFILPI. The Cytoplasmic portion of the chain corresponds to 673 to 758; sequence NSALNPIIYT…SQSSRLNSYS (86 aa).

Belongs to the G-protein coupled receptor 1 family. As to quaternary structure, interacts with C1QTNF8.

The protein resides in the cell membrane. In terms of biological role, receptor for relaxins. The activity of this receptor is mediated by G proteins leading to stimulation of adenylate cyclase and an increase of cAMP. Binding of the ligand may also activate a tyrosine kinase pathway that inhibits the activity of a phosphodiesterase that degrades cAMP. This is Relaxin receptor 1 (Rxfp1) from Mus musculus (Mouse).